A 284-amino-acid chain; its full sequence is Avenin-like b6 (284 aa).

Positions 1–18 (MKVFILALLALAATTAIA) are cleaved as a signal peptide.

The protein belongs to the prolamin family. In terms of processing, contains disulfide bonds.

Seed storage protein. Might be integrated via inter-chain disulfide bonds within the glutenin polymer. This chain is Avenin-like b6, found in Triticum aestivum (Wheat).